Consider the following 346-residue polypeptide: NADH-ubiquinone oxidoreductase chain 2 (346 aa).

10 consecutive transmembrane segments (helical) span residues 3-23 (PIIF…VMIS), 25-45 (HWLL…PIMM), 67-87 (SMLL…WTVM), 96-116 (MLMT…FWVP), 122-142 (IPLS…MSVL), 145-165 (IFPS…ILIG), 200-220 (TLLN…MFMA), 238-258 (IMTI…PLSG), 273-293 (NSII…YFYM), and 324-344 (FLPT…MLSV).

Belongs to the complex I subunit 2 family. Core subunit of respiratory chain NADH dehydrogenase (Complex I) which is composed of 45 different subunits. Interacts with TMEM242.

It localises to the mitochondrion inner membrane. The enzyme catalyses a ubiquinone + NADH + 5 H(+)(in) = a ubiquinol + NAD(+) + 4 H(+)(out). Core subunit of the mitochondrial membrane respiratory chain NADH dehydrogenase (Complex I) which catalyzes electron transfer from NADH through the respiratory chain, using ubiquinone as an electron acceptor. Essential for the catalytic activity and assembly of complex I. The chain is NADH-ubiquinone oxidoreductase chain 2 from Bos mutus grunniens (Wild yak).